A 126-amino-acid polypeptide reads, in one-letter code: Translation initiation factor 5A (126 aa).

Lysine 36 carries the hypusine modification.

The protein belongs to the eIF-5A family.

It is found in the cytoplasm. Functionally, functions by promoting the formation of the first peptide bond. In Haloarcula marismortui (strain ATCC 43049 / DSM 3752 / JCM 8966 / VKM B-1809) (Halobacterium marismortui), this protein is Translation initiation factor 5A.